The chain runs to 223 residues: CKLF-like MARVEL transmembrane domain-containing protein 5 (223 aa).

Positions 29–213 (FLTSHKGILL…DAFKIYRTEM (185 aa)) constitute an MARVEL domain. The next 4 membrane-spanning stretches (helical) occupy residues 35–55 (GILL…FTAS), 56–76 (ISAY…FLFL), 162–182 (FLRC…AVTS), and 186–206 (AAIA…YDAF).

This sequence belongs to the chemokine-like factor family. In terms of tissue distribution, highly expressed in the brain.

It localises to the membrane. This chain is CKLF-like MARVEL transmembrane domain-containing protein 5 (CMTM5), found in Homo sapiens (Human).